Here is a 706-residue protein sequence, read N- to C-terminus: Complement C1r-B subcomponent (706 aa).

A signal peptide spans 1–16; the sequence is MWLFALLVTLFYGVEG. The CUB 1 domain occupies 17 to 140; that stretch reads SIYLPQKLYG…KGFLAYYQAV (124 aa). Ca(2+) is bound by residues Glu65, Asp73, and Asp118. Cys70 and Cys88 are joined by a disulfide. N-linked (GlcNAc...) asparagine glycosylation occurs at Asn124. 3 residues coordinate Ca(2+): Asp141, Leu142, and Glu144. Positions 141 to 189 constitute an EGF-like; calcium-binding domain; sequence DLDECASQPNSVEEGLQPRCQHLCHNYVGGYFCSCHPGYELQKDGQSCQ. Disulfide bonds link Cys145–Cys164, Cys160–Cys173, Cys175–Cys188, and Cys192–Cys219. Residues Asn166, Tyr167, and Gly170 each coordinate Ca(2+). Residue Asn166 is modified to (3R)-3-hydroxyasparagine. Positions 192-304 constitute a CUB 2 domain; it reads CSSELYTEPS…RGWKLHYTTE (113 aa). At Ser205 the chain carries Phosphoserine; by CK2. Asn220 is a glycosylation site (N-linked (GlcNAc...) asparagine). The Ca(2+) site is built by Asp242, Asp252, Asp289, and Asp293. A disulfide bridge connects residues Cys249 and Cys267. Sushi domains are found at residues 306–372 and 373–448; these read IKCP…RCKI and KNCG…RCLP. Intrachain disulfides connect Cys308/Cys357, Cys337/Cys370, Cys375/Cys428, Cys405/Cys446, and Cys450/Cys578. Residues 463 to 703 form the Peptidase S1 domain; the sequence is IIGGQPARPG…YVDWIKKEMG (241 aa). Catalysis depends on charge relay system residues His501 and Asp558. An N-linked (GlcNAc...) asparagine glycan is attached at Asn582. 2 disulfide bridges follow: Cys621-Cys640 and Cys651-Cys681. Residue Ser655 is the Charge relay system of the active site.

Belongs to the peptidase S1 family. Core component of the complement C1 complex, a calcium-dependent complex composed of 1 molecule of the C1Q subcomplex, 2 molecules of C1R and 2 molecules of C1S. The C1Q subcomplex is composed 18 subunits: 3 chains of C1QA, C1QB, and C1QC trimerize to form 6 collagen-like triple helices connected to six globular ligand-recognition modules. Within the C1 complex, C1R is a dimer of identical chains, each of which is activated by cleavage into two chains, heavy and light, connected by disulfide bonds. Cleaved and activated by autocatalytic processing to generate Complement C1r subcomponent heavy and light chains that are connected by disulfide bonds. In terms of processing, the iron and 2-oxoglutarate dependent 3-hydroxylation of aspartate and asparagine is (R) stereospecific within EGF domains.

The protein resides in the secreted. Its subcellular location is the cell surface. The enzyme catalyses Selective cleavage of Lys(or Arg)-|-Ile bond in complement subcomponent C1s to form the active form of C1s (EC 3.4.21.42).. Activated by the C1Q subcomplex of the C1 complex following C1Q binding to immunoglobulins (IgG or IgM) complexed with antigens to form antigen-antibody complexes on the surface of pathogens. Immunoglobulin-binding promotes autoactivation of C1R, which results in the cleavage of the Arg-Ile bond in the catalytic domain. Its function is as follows. Serine protease component of the complement C1 complex, a multiprotein complex that initiates the classical pathway of the complement system, a cascade of proteins that leads to phagocytosis and breakdown of pathogens and signaling that strengthens the adaptive immune system. C1R catalyzes the first enzymatic step in the classical complement pathway: it is activated by the C1Q subcomplex of the C1 complex, which associates with IgG or IgM immunoglobulins complexed with antigens to form antigen-antibody complexes on the surface of pathogens. Immunoglobulin-binding promotes the autocatalytic cleavage and activation of C1R. Activated C1R then cleaves and activates C1S, the second protease of the classical complement pathway. It is unclear if C1R activates C1S within single, strained C1 complexes or between neighboring C1 complexes on surfaces. In Mus musculus (Mouse), this protein is Complement C1r-B subcomponent (C1rb).